The following is a 268-amino-acid chain: Nitrite transporter NirC (268 aa).

Residues 1-25 lie on the Cytoplasmic side of the membrane; sequence MFTDTINKCAANAARIARLSANNPL. The helical transmembrane segment at 26-46 threads the bilayer; sequence GFWVSSAMAGAYVGLGIILIF. The Periplasmic segment spans residues 47–59; it reads TLGNLLDPSVRPL. A helical transmembrane segment spans residues 60–80; it reads VMGATFGIALTLVIIAGSELF. At 81 to 112 the chain is on the cytoplasmic side; it reads TGHTMFLTFGVKAGSISHGQMWAILPQTWLGN. The helical transmembrane segment at 113 to 133 threads the bilayer; sequence LVGSVFVAMLYSWGGGSLLPV. At 134–151 the chain is on the periplasmic side; the sequence is DTSIVHSVALAKTTAPAM. A helical transmembrane segment spans residues 152-172; sequence VLFFKGALCNWLVCLAIWMAL. Residues 173–179 are Cytoplasmic-facing; sequence RTEGAAK. The chain crosses the membrane as a helical span at residues 180-200; the sequence is FIAIWWCLLAFIASGYEHSIA. Residues 201–225 lie on the Periplasmic side of the membrane; it reads NMTLFALSWFGNHSEAYTLAGIGHN. A helical membrane pass occupies residues 226-246; sequence LLWVTLGNTLSGAVFMGLGYW. The Cytoplasmic portion of the chain corresponds to 247–268; it reads YATPKANRPVADKFNQTETAAG.

Belongs to the FNT transporter (TC 1.A.16) family.

The protein resides in the cell inner membrane. In terms of biological role, catalyzes nitrite uptake and nitrite export across the cytoplasmic membrane. Is up to 10-fold more active than NarK or NarU in nitrite uptake for subsequent reduction in the cytoplasm by the NirB/NirD nitrite reductase. This chain is Nitrite transporter NirC (nirC), found in Escherichia coli (strain K12).